Here is a 588-residue protein sequence, read N- to C-terminus: Putative ABC transporter ATP-binding protein PAM_020 (588 aa).

ABC transporter domains follow at residues 6–247 (IIFK…GIQE) and 317–551 (LQLQ…TSLN). ATP-binding positions include 40 to 47 (GKNGSGKS) and 351 to 358 (GKNGSGKS).

The protein belongs to the ABC transporter superfamily.

Its subcellular location is the cell membrane. Probably part of an ABC transporter complex. Responsible for energy coupling to the transport system. The polypeptide is Putative ABC transporter ATP-binding protein PAM_020 (Onion yellows phytoplasma (strain OY-M)).